A 279-amino-acid polypeptide reads, in one-letter code: Thymidylate synthase (279 aa).

133-134 (RR) contributes to the dUMP binding site. C154 acts as the Nucleophile in catalysis. Residues 178–181 (RSND), N189, and 219–221 (HIY) each bind dUMP. D181 lines the (6R)-5,10-methylene-5,6,7,8-tetrahydrofolate pocket. Residue A278 coordinates (6R)-5,10-methylene-5,6,7,8-tetrahydrofolate.

Belongs to the thymidylate synthase family. Bacterial-type ThyA subfamily. In terms of assembly, homodimer.

It is found in the cytoplasm. It catalyses the reaction dUMP + (6R)-5,10-methylene-5,6,7,8-tetrahydrofolate = 7,8-dihydrofolate + dTMP. The protein operates within pyrimidine metabolism; dTTP biosynthesis. In terms of biological role, catalyzes the reductive methylation of 2'-deoxyuridine-5'-monophosphate (dUMP) to 2'-deoxythymidine-5'-monophosphate (dTMP) while utilizing 5,10-methylenetetrahydrofolate (mTHF) as the methyl donor and reductant in the reaction, yielding dihydrofolate (DHF) as a by-product. This enzymatic reaction provides an intracellular de novo source of dTMP, an essential precursor for DNA biosynthesis. This chain is Thymidylate synthase, found in Streptococcus gordonii (strain Challis / ATCC 35105 / BCRC 15272 / CH1 / DL1 / V288).